A 603-amino-acid chain; its full sequence is Trihelix transcription factor DF1 (603 aa).

Positions 60-118 constitute a Myb-like 1 domain; that stretch reads NRWPRQETLALLKIRSDMGIAFRDASVKGPLWEEVSRKMAEHGYIRNAKKCKEKFENVY. 4 disordered regions span residues 149–201, 220–249, 333–408, and 532–603; these read QSTT…SSIP, LSDN…TRKK, KQPN…SSSR, and QWPP…TNNL. Composition is skewed to low complexity over residues 168 to 178, 189 to 198, 221 to 236, and 344 to 362; these read NNNNNNNNNNN, TTVMPTLPSS, SDNS…TSSD, and PQQV…QQPP. Positions 363–376 are enriched in pro residues; it reads QRSPPPQPPAPLPQ. The segment covering 381 to 408 has biased composition (polar residues); sequence VVSTLDTTKTDNGGDQNMTPAASASSSR. The region spanning 401–465 is the Myb-like 2 domain; it reads AASASSSRWP…RCKEKWENIN (65 aa). Over residues 532 to 555 the composition is skewed to low complexity; it reads QWPPAVTTATTTPAAAQPDQQSQP. Residues 559–586 show a composition bias toward acidic residues; that stretch reads NFDDEEGTDEEYDDEDEEEENEEEEGGE. Low complexity predominate over residues 593–603; it reads NNNNNKTTNNL.

It is found in the nucleus. In terms of biological role, transcription repressor that negatively regulates root hair growth by directly binding RSL4 promoter and repressing RSL4 expression. Required for the synthesis of seed coat mucilage. This chain is Trihelix transcription factor DF1, found in Arabidopsis thaliana (Mouse-ear cress).